Here is a 447-residue protein sequence, read N- to C-terminus: N-succinylarginine dihydrolase (447 aa).

Residues 19 to 28, asparagine 110, and 137 to 138 each bind substrate; these read AGLSFGNEAS and HR. Glutamate 174 is an active-site residue. Substrate is bound at residue arginine 213. Residue histidine 249 is part of the active site. Substrate-binding residues include aspartate 251 and asparagine 364. The active-site Nucleophile is cysteine 370.

This sequence belongs to the succinylarginine dihydrolase family. In terms of assembly, homodimer.

It carries out the reaction N(2)-succinyl-L-arginine + 2 H2O + 2 H(+) = N(2)-succinyl-L-ornithine + 2 NH4(+) + CO2. Its pathway is amino-acid degradation; L-arginine degradation via AST pathway; L-glutamate and succinate from L-arginine: step 2/5. Functionally, catalyzes the hydrolysis of N(2)-succinylarginine into N(2)-succinylornithine, ammonia and CO(2). This Yersinia pseudotuberculosis serotype O:1b (strain IP 31758) protein is N-succinylarginine dihydrolase.